The following is a 253-amino-acid chain: Proproteinase E (253 aa).

The propeptide at 1–11 is activation peptide; it reads FSQPFSRPSSR. The Peptidase S1 domain maps to 12-251; it reads VVNGEDAVPY…FIDWIDETIA (240 aa). Cystine bridges form between Cys-41–Cys-57, Cys-100–Cys-103, Cys-140–Cys-206, Cys-171–Cys-187, and Cys-196–Cys-227.

This sequence belongs to the peptidase S1 family. Monomer. The zymogen is secreted as a ternary complex composed of procarboxypeptidase A, chymotrypsinogen C and proproteinase E. Pancreas.

Its subcellular location is the secreted. The protein resides in the extracellular space. Its function is as follows. May protect procarboxypeptidase A against denaturation in the acidic environment of the ruminant duodenum. This chain is Proproteinase E, found in Bos taurus (Bovine).